Consider the following 727-residue polypeptide: DNA ligase (727 aa).

NAD(+) contacts are provided by residues 71–75 (DGEFD), 120–121 (SL), and Glu-150. Lys-152 serves as the catalytic N6-AMP-lysine intermediate. Arg-173, Glu-213, Lys-329, and Lys-353 together coordinate NAD(+). 4 residues coordinate Zn(2+): Cys-447, Cys-450, Cys-466, and Cys-472. Positions 636 to 725 (SIERHLTGLS…PEAAAEAALP (90 aa)) constitute a BRCT domain.

Belongs to the NAD-dependent DNA ligase family. LigA subfamily. Requires Mg(2+) as cofactor. Mn(2+) is required as a cofactor.

It catalyses the reaction NAD(+) + (deoxyribonucleotide)n-3'-hydroxyl + 5'-phospho-(deoxyribonucleotide)m = (deoxyribonucleotide)n+m + AMP + beta-nicotinamide D-nucleotide.. DNA ligase that catalyzes the formation of phosphodiester linkages between 5'-phosphoryl and 3'-hydroxyl groups in double-stranded DNA using NAD as a coenzyme and as the energy source for the reaction. It is essential for DNA replication and repair of damaged DNA. In Saccharopolyspora erythraea (strain ATCC 11635 / DSM 40517 / JCM 4748 / NBRC 13426 / NCIMB 8594 / NRRL 2338), this protein is DNA ligase.